We begin with the raw amino-acid sequence, 35 residues long: Pheromone-binding protein 2 (35 aa).

It belongs to the PBP/GOBP family. In terms of assembly, homodimer. As to expression, antenna.

This major soluble protein in olfactory sensilla of male moths might serve to solubilize the extremely hydrophobic pheromone molecules and to transport pheromone through the aqueous lymph to receptors located on olfactory cilia. The polypeptide is Pheromone-binding protein 2 (Lymantria dispar (Gypsy moth)).